Here is an 804-residue protein sequence, read N- to C-terminus: MRALWVLGLCCVLLTFGSVRAEDEVDVDGTVEEDLGKSREGSRTDDEVVQREEEAIQLDGLNASQIRELREKSEKFAFQAEVNRMMKLIINSLYKNKEIFLRELISNASDALDKIRLISLTDENALAGNEELTVKIKCDKEKNLLHVTDTGVGMTREELVKNLGTIAKSGTSEFLNKMAEAQEDGQSTSELIGQFGVGFYSAFLVADKVIVTSKHNNDTQHIWESDSNEFSVIADPRGNTLGRGTTITLVLKEEASDYLELDTIKNLVKKYSQFINFPIYVWSSKTETVEEPMEEEEAAKEEKEESDDEAAVEEEEEEKKPKTKKVEKTVWDWELMNDIKPIWQRPSKEVEDDEYKAFYKSFSKESDDPMAYIHFTAEGEVTFKSILFVPTSAPRGLFDEYGSKKSDYIKLYVRRVFITDDFHDMMPKYLNFVKGVVDSDDLPLNVSRETLQQHKLLKVIRKKLVRKTLDMIKKIADEKYNDTFWKEFGTNIKLGVIEDHSNRTRLAKLLRFQSSHHPSDITSLDQYVERMKEKQDKIYFMAGSSRKEAESSPFVERLLKKGYEVIYLTEPVDEYCIQALPEFDGKRFQNVAKEGVKFDESEKSKENREAVEKEFEPLLNWMKDKALKDKIEKAVVSQRLTESPCALVASQYGWSGNMERIMKAQAYQTGKDISTNYYASQKKTFEINPRHPLIRDMLRRVKEDEDDKTVSDLAVVLFETATLRSGYLLPDTKAYGDRIERMLRLSLNIDPDAKVEEEPEEEPEETTEDTTEDTEQDDDEEMDAGADEEEQETSETSTAEKDEL.

A signal peptide spans 1 to 21; sequence MRALWVLGLCCVLLTFGSVRA. An SRT pseudosubstrate motif motif is present at residues 42-44; the sequence is SRT. An N-linked (GlcNAc...) asparagine glycan is attached at Asn62. At Ser64 the chain carries Phosphoserine. Residue Asn107 is glycosylated (N-linked (GlcNAc...) asparagine). Asn107, Asp149, and Asn162 together coordinate ATP. The residue at position 168 (Lys168) is an N6-(2-hydroxyisobutyryl)lysine. Ser172 is subject to Phosphoserine. Residue Phe199 participates in ATP binding. N-linked (GlcNAc...) asparagine glycosylation is present at Asn217. The disordered stretch occupies residues 288–323; sequence TVEEPMEEEEAAKEEKEESDDEAAVEEEEEEKKPKT. The segment covering 289–317 has biased composition (acidic residues); that stretch reads VEEPMEEEEAAKEEKEESDDEAAVEEEEE. Residues Ser306 and Ser403 each carry the phosphoserine modification. Lys404 is modified (N6-succinyllysine). N-linked (GlcNAc...) asparagine glycosylation is present at Asn445. Ser447 is modified (phosphoserine). Residue Lys479 is modified to N6-acetyllysine. Asn481 and Asn502 each carry an N-linked (GlcNAc...) asparagine glycan. Residue Lys633 is modified to N6-succinyllysine. Positions 750 to 804 are disordered; the sequence is DPDAKVEEEPEEEPEETTEDTTEDTEQDDDEEMDAGADEEEQETSETSTAEKDEL. The span at 757 to 793 shows a compositional bias: acidic residues; sequence EEPEEEPEETTEDTTEDTEQDDDEEMDAGADEEEQET. Residues 801-804 carry the Prevents secretion from ER motif; the sequence is KDEL.

This sequence belongs to the heat shock protein 90 family. Homodimer; disulfide-linked. Component of an EIF2 complex at least composed of CELF1/CUGBP1, CALR, CALR3, EIF2S1, EIF2S2, HSP90B1 and HSPA5. Part of a large chaperone multiprotein complex comprising DNAJB11, HSP90B1, HSPA5, HYOU, PDIA2, PDIA4, PDIA6, PPIB, SDF2L1, UGGT1 and very small amounts of ERP29, but not, or at very low levels, CALR nor CANX. Interacts with AIMP1; regulates its retention in the endoplasmic reticulum. Hyperglycosylated form interacts with OS9; promoting its degradation by the endoplasmic reticulum associated degradation (ERAD). Interacts with CNPY3. This interaction is disrupted in the presence of ATP. Interacts with TLR4 and TLR9, but not with TLR3. Interacts with MZB1 in a calcium-dependent manner. Interacts with METTL23. Interacts with IL1B; the interaction facilitates cargo translocation into the ERGIC. Interacts with EIF2AK3. Post-translationally, phosphorylated by CK2. N-glycosylated cotranslationally at Asn-217 by STT3A-containing OST-A complex: this glycosylation is constitutive. In response to various stress, 5 additional facultative sites (Asn-62, Asn-107, Asn-445, Asn-481 and Asn-502) can be glycosylated post-translationally by STT3B-containing OST-B complex, leading to a hyperglycosylated form that is degraded by the ER-associated degradation (ERAD) pathway. In normal conditions, the OST-A complex together with CCDC134 prevent glycosylation at facultative sites during protein folding, thereby preventing hyperglycosylation. Mechanistically, nascent HSP90B1 is tethered during translation to a specialized CCDC134-containing translocon that forms a microenvironment for its folding, in which STT3A associates with the SRT pseudosubstrate motif, and prevents access to facultative glycosylation sites until folding is completed, rendering its facultative sites inaccessible to the OST-B complex.

It is found in the endoplasmic reticulum lumen. The protein localises to the sarcoplasmic reticulum lumen. The protein resides in the melanosome. The enzyme catalyses ATP + H2O = ADP + phosphate + H(+). ATP-dependent chaperone involved in the processing of proteins in the endoplasmic reticulum, regulating their transport. Together with MESD, acts as a modulator of the Wnt pathway by promoting the folding of LRP6, a coreceptor of the canonical Wnt pathway. When associated with CNPY3, required for proper folding of Toll-like receptors. Promotes folding and trafficking of TLR4 to the cell surface. May participate in the unfolding of cytosolic leaderless cargos (lacking the secretion signal sequence) such as the interleukin 1/IL-1 to facilitate their translocation into the ERGIC (endoplasmic reticulum-Golgi intermediate compartment) and secretion; the translocation process is mediated by the cargo receptor TMED10. This Sus scrofa (Pig) protein is Endoplasmin (HSP90B1).